The following is a 227-amino-acid chain: Uracil-DNA glycosylase 2 (227 aa).

D67 serves as the catalytic Proton acceptor.

Belongs to the uracil-DNA glycosylase (UDG) superfamily. UNG family.

It localises to the cytoplasm. It carries out the reaction Hydrolyzes single-stranded DNA or mismatched double-stranded DNA and polynucleotides, releasing free uracil.. Excises uracil residues from the DNA which can arise as a result of misincorporation of dUMP residues by DNA polymerase or due to deamination of cytosine. The chain is Uracil-DNA glycosylase 2 (ung2) from Streptomyces avermitilis (strain ATCC 31267 / DSM 46492 / JCM 5070 / NBRC 14893 / NCIMB 12804 / NRRL 8165 / MA-4680).